Consider the following 199-residue polypeptide: Thymidine kinase (199 aa).

Residues 15–22 (GSMFSGKS) and 88–91 (DEVQ) contribute to the ATP site. E89 serves as the catalytic Proton acceptor. Zn(2+) is bound by residues C145, C148, C183, and H186.

It belongs to the thymidine kinase family. Homotetramer.

The protein localises to the cytoplasm. The catalysed reaction is thymidine + ATP = dTMP + ADP + H(+). This is Thymidine kinase from Staphylococcus epidermidis (strain ATCC 12228 / FDA PCI 1200).